We begin with the raw amino-acid sequence, 134 residues long: Small ribosomal subunit protein bS6 (134 aa).

The segment at 97–134 (TDVSPIKASEGREDRRSAPQREERNHDNSDEVSEESED) is disordered. Over residues 105–125 (SEGREDRRSAPQREERNHDNS) the composition is skewed to basic and acidic residues.

It belongs to the bacterial ribosomal protein bS6 family.

In terms of biological role, binds together with bS18 to 16S ribosomal RNA. The polypeptide is Small ribosomal subunit protein bS6 (Marinomonas sp. (strain MWYL1)).